The primary structure comprises 519 residues: Cytosol aminopeptidase (519 aa).

Ser-42 is modified (phosphoserine). Lys-45 is modified (N6-succinyllysine). Ser-54 carries the phosphoserine modification. 2 positions are modified to N6-succinyllysine: Lys-61 and Lys-103. Phosphoserine occurs at positions 180 and 194. Leu-202, Met-203, and Thr-205 together coordinate Zn(2+). Lys-221 is modified (N6-acetyllysine; alternate). Position 221 is an N6-succinyllysine; alternate (Lys-221). The residue at position 238 (Ser-238) is a Phosphoserine. Zn(2+)-binding residues include Lys-282 and Asp-287. Substrate contacts are provided by Lys-282, Asp-287, Ser-292, and Lys-294. Position 287 (Asp-287) interacts with Mg(2+). Lys-294 is a catalytic residue. Zn(2+) contacts are provided by Arg-303, Asp-305, Asp-364, and Glu-366. 2 residues coordinate substrate: Asp-305 and Asp-364. The Mg(2+) site is built by Asp-364 and Glu-366. Arg-368 is an active-site residue. Residue Lys-455 is modified to N6-acetyllysine; alternate. Lys-455 bears the N6-succinyllysine; alternate mark. An N6-succinyllysine modification is found at Lys-476. N6-acetyllysine; alternate is present on Lys-489. Lys-489 is modified (N6-succinyllysine; alternate).

Belongs to the peptidase M17 family. Homohexamer. Requires Zn(2+) as cofactor. It depends on Mn(2+) as a cofactor.

It localises to the cytoplasm. The catalysed reaction is Release of an N-terminal amino acid, Xaa-|-Yaa-, in which Xaa is preferably Leu, but may be other amino acids including Pro although not Arg or Lys, and Yaa may be Pro. Amino acid amides and methyl esters are also readily hydrolyzed, but rates on arylamides are exceedingly low.. It catalyses the reaction an S-substituted L-cysteinylglycine + H2O = an S-substituted L-cysteine + glycine. It carries out the reaction L-cysteinylglycine + H2O = L-cysteine + glycine. The enzyme catalyses S-benzyl-L-cysteinylglycine + H2O = S-benzyl-L-cysteine + glycine. The catalysed reaction is Release of N-terminal proline from a peptide.. Functionally, cytosolic metallopeptidase that catalyzes the removal of unsubstituted N-terminal hydrophobic amino acids from various peptides. The presence of Zn(2+) ions is essential for the peptidase activity, and the association with other cofactors can modulate the substrate spectificity of the enzyme. For instance, in the presence of Mn(2+), it displays a specific Cys-Gly hydrolyzing activity of Cys-Gly-S-conjugates. Involved in the metabolism of glutathione and in the degradation of glutathione S-conjugates, which may play a role in the control of the cell redox status. The protein is Cytosol aminopeptidase of Sus scrofa (Pig).